A 130-amino-acid chain; its full sequence is Small ribosomal subunit protein uS11c (130 aa).

The protein belongs to the universal ribosomal protein uS11 family. Part of the 30S ribosomal subunit.

The protein resides in the plastid. It localises to the chloroplast. In Chara vulgaris (Common stonewort), this protein is Small ribosomal subunit protein uS11c.